The following is a 35-amino-acid chain: Photosystem II reaction center protein T (35 aa).

The helical transmembrane segment at 3–23 threads the bilayer; the sequence is SVAYILILTLAIGVLFFAIAF.

This sequence belongs to the PsbT family. In terms of assembly, PSII is composed of 1 copy each of membrane proteins PsbA, PsbB, PsbC, PsbD, PsbE, PsbF, PsbH, PsbI, PsbJ, PsbK, PsbL, PsbM, PsbT, PsbX, PsbY, PsbZ, Psb30/Ycf12, peripheral proteins PsbO, CyanoQ (PsbQ), PsbU, PsbV and a large number of cofactors. It forms dimeric complexes.

It localises to the cellular thylakoid membrane. Found at the monomer-monomer interface of the photosystem II (PS II) dimer, plays a role in assembly and dimerization of PSII. PSII is a light-driven water plastoquinone oxidoreductase, using light energy to abstract electrons from H(2)O, generating a proton gradient subsequently used for ATP formation. This Nostoc sp. (strain PCC 7120 / SAG 25.82 / UTEX 2576) protein is Photosystem II reaction center protein T.